Reading from the N-terminus, the 217-residue chain is Thiopurine S-methyltransferase (217 aa).

Positions 11, 46, 67, and 122 each coordinate S-adenosyl-L-methionine.

Belongs to the class I-like SAM-binding methyltransferase superfamily. TPMT family.

It is found in the cytoplasm. The enzyme catalyses S-adenosyl-L-methionine + a thiopurine = S-adenosyl-L-homocysteine + a thiopurine S-methylether.. This is Thiopurine S-methyltransferase from Vibrio atlanticus (strain LGP32) (Vibrio splendidus (strain Mel32)).